A 710-amino-acid chain; its full sequence is Low-temperature-induced 78 kDa protein (710 aa).

Disordered regions lie at residues 1–198 (MDQT…LDGQ), 225–269 (YQSK…RDLS), and 305–507 (GFGD…STYT). A compositionally biased stretch (basic and acidic residues) spans 14–25 (QHPEEVEHHENG). Positions 29-41 (MFRKVKARAKKFK) are enriched in basic residues. Positions 49-58 (QSNEHEQDHD) are enriched in basic and acidic residues. A compositionally biased stretch (acidic residues) spans 59 to 73 (LVEEDDDDDELEPEV). Residues 138–168 (SDKEEKRDVPIHHPLSELSDREESRETHHES) show a composition bias toward basic and acidic residues. A compositionally biased stretch (polar residues) spans 169–187 (LNTPVSLLSGTEDVTSTFA). 5 tandem repeats follow at residues 303–316 (PVGF…ELEK), 317–331 (DFPT…KTET), 336–350 (NSPS…KTES), 357–370 (PMGF…ELEK), and 398–412 (NFPV…KNES). The segment at 303–370 (PVGFGDESGA…GSESGAELEK (68 aa)) is 2 X 14 AA repeats of P-[MV]-G-F-G-[DS]-E-S-G-A-E-L-E-K. 6 stretches are compositionally biased toward basic and acidic residues: residues 313-331 (ELEK…KTET), 340-352 (RSHE…ESGN), 367-380 (ELEK…DSGR), 402-418 (RSHE…DKDV), 442-466 (EDKF…KTET), and 475-487 (SHPK…KESR). A 3 X 15 AA repeats of [DN]-[FS]-P-[STV]-R-S-H-[DE]-[FL]-D-[LM]-K-[NT]-E-[ST] region spans residues 317–412 (DFPTRSHDFD…SHELDLKNES (96 aa)). 3 repeat units span residues 510-514 (FASML), 532-536 (VDEKL), and 550-554 (VTTKL). Residues 510-600 (FASMLGYSGE…AFSDMVAEKL (91 aa)) form a 5 X 5 AA repeats of [FV]-[ADT]-[EST]-[KM]-L region. The tract at residues 537 to 577 (TPVNEKDQETESAVTTKLPISGGGSGVEEQRGEDKSVSGRD) is disordered. The segment covering 564-577 (EEQRGEDKSVSGRD) has biased composition (basic and acidic residues). 2 repeat units span residues 579–583 (VAEKL) and 596–600 (VAEKL). Residues 601–710 (QIGGEEEKKE…STVVPVQKEL (110 aa)) form a disordered region. Basic and acidic residues predominate over residues 605 to 626 (EEEKKETTTKEVEKISTEKAAS). A Phosphoserine modification is found at S626. Residues 638–654 (GGGGMVGRIKGWFGGGA) are compositionally biased toward gly residues. 2 tandem repeats follow at residues 648-670 (GWFG…EEAP) and 674-696 (GWFG…EESP). Positions 648 to 696 (GWFGGGATDEVKPESPHSVEEAPKSSGWFGGGATEEVKPKSPHSVEESP) are 2 X 23 AA repeats. Basic and acidic residues-rich tracts occupy residues 656–670 (DEVK…EEAP) and 682–693 (EEVKPKSPHSVE).

The protein belongs to the LTI78/LTI65 family. In terms of tissue distribution, accumulates rapidly in leaves, stems, roots, flower petals, filaments, and sepals during cold-acclimation.

The protein resides in the cytoplasm. Its function is as follows. Involved in responses to abiotic stresses. Regulates probably root elongation in cold conditions. The sequence is that of Low-temperature-induced 78 kDa protein from Arabidopsis thaliana (Mouse-ear cress).